The sequence spans 304 residues: Coenzyme PQQ synthesis protein B (304 aa).

The protein belongs to the PqqB family.

It functions in the pathway cofactor biosynthesis; pyrroloquinoline quinone biosynthesis. May be involved in the transport of PQQ or its precursor to the periplasm. The protein is Coenzyme PQQ synthesis protein B of Ectopseudomonas mendocina (strain ymp) (Pseudomonas mendocina).